Reading from the N-terminus, the 268-residue chain is Ribosomal RNA small subunit methyltransferase A (268 aa).

Positions 18, 20, 45, 66, 91, and 112 each coordinate S-adenosyl-L-methionine.

It belongs to the class I-like SAM-binding methyltransferase superfamily. rRNA adenine N(6)-methyltransferase family. RsmA subfamily.

The protein localises to the cytoplasm. The enzyme catalyses adenosine(1518)/adenosine(1519) in 16S rRNA + 4 S-adenosyl-L-methionine = N(6)-dimethyladenosine(1518)/N(6)-dimethyladenosine(1519) in 16S rRNA + 4 S-adenosyl-L-homocysteine + 4 H(+). Functionally, specifically dimethylates two adjacent adenosines (A1518 and A1519) in the loop of a conserved hairpin near the 3'-end of 16S rRNA in the 30S particle. May play a critical role in biogenesis of 30S subunits. The polypeptide is Ribosomal RNA small subunit methyltransferase A (Shewanella baltica (strain OS185)).